The following is a 480-amino-acid chain: Ochratoxinase (480 aa).

The Zn(2+) site is built by His111, His113, Lys246, His287, and His307. The active site involves Lys246. Asp378 is an active-site residue.

The protein belongs to the metallo-dependent hydrolases superfamily. Ochratoxinase amidase 2 family. As to quaternary structure, homooctamer. The cofactor is Zn(2+).

The protein resides in the secreted. The enzyme catalyses ochratoxin A + H2O = ochratoxin alpha + L-phenylalanine. With respect to regulation, the Zn(2+)-specific chelator 1,10-phenanthroline inhibits the enzyme activity. In terms of biological role, carboxypeptidase that catalyzes the release of a C-terminal amino acid with specific catalytic activity for aromatic amino acids such as phenylalanine. Is able to degrade ochratoxin A, one of the five major mycotoxins most harmful to humans and animals that is produced by Aspergillus and Penicillium species and occurs in a wide range of agricultural products. In Aspergillus niger (strain ATCC MYA-4892 / CBS 513.88 / FGSC A1513), this protein is Ochratoxinase.